The primary structure comprises 211 residues: Arginine exporter protein ArgO (211 aa).

Over M1–M38 the chain is Cytoplasmic. Residues I39 to G58 form a helical membrane-spanning segment. Topologically, residues S59–M63 are periplasmic. A helical membrane pass occupies residues Q64–A91. Over M92–E102 the chain is Cytoplasmic. A helical membrane pass occupies residues V103–F130. The Periplasmic segment spans residues V131 to L140. A helical membrane pass occupies residues D141–L170. Residues A171–R173 are Cytoplasmic-facing. The chain crosses the membrane as a helical span at residues L174–R200. Topologically, residues D201 to S211 are periplasmic.

The protein belongs to the LysE/ArgO transporter (TC 2.A.75) family. In terms of assembly, monomer.

The protein resides in the cell inner membrane. The enzyme catalyses L-arginine(in) = L-arginine(out). Involved in the export of arginine. Important to control the intracellular level of arginine and the correct balance between arginine and lysine. May also be involved in the export of canavanine (a plant-derived antimetabolite). In Escherichia coli (strain K12), this protein is Arginine exporter protein ArgO.